Reading from the N-terminus, the 367-residue chain is Flagellar P-ring protein (367 aa).

A signal peptide spans 1–22; it reads MRRMLVIRWILAIHLIATQVFA.

It belongs to the FlgI family. The basal body constitutes a major portion of the flagellar organelle and consists of four rings (L,P,S, and M) mounted on a central rod.

It is found in the periplasm. The protein resides in the bacterial flagellum basal body. In terms of biological role, assembles around the rod to form the L-ring and probably protects the motor/basal body from shearing forces during rotation. The sequence is that of Flagellar P-ring protein from Legionella pneumophila subsp. pneumophila (strain Philadelphia 1 / ATCC 33152 / DSM 7513).